A 594-amino-acid polypeptide reads, in one-letter code: Aspartate--tRNA(Asp/Asn) ligase (594 aa).

Glu175 serves as a coordination point for L-aspartate. Residues 199-202 (QLFK) form an aspartate region. Arg221 provides a ligand contact to L-aspartate. ATP is bound by residues 221 to 223 (RDE) and Gln230. His446 serves as a coordination point for L-aspartate. Position 491 (Glu491) interacts with ATP. Arg498 provides a ligand contact to L-aspartate. An ATP-binding site is contributed by 543–546 (GLDR).

Belongs to the class-II aminoacyl-tRNA synthetase family. Type 1 subfamily. In terms of assembly, homodimer.

It is found in the cytoplasm. The enzyme catalyses tRNA(Asx) + L-aspartate + ATP = L-aspartyl-tRNA(Asx) + AMP + diphosphate. In terms of biological role, aspartyl-tRNA synthetase with relaxed tRNA specificity since it is able to aspartylate not only its cognate tRNA(Asp) but also tRNA(Asn). Reaction proceeds in two steps: L-aspartate is first activated by ATP to form Asp-AMP and then transferred to the acceptor end of tRNA(Asp/Asn). The sequence is that of Aspartate--tRNA(Asp/Asn) ligase from Thermodesulfovibrio yellowstonii (strain ATCC 51303 / DSM 11347 / YP87).